The following is a 329-amino-acid chain: E3 ubiquitin-protein ligase SINA-like 4 (329 aa).

Residues 1-12 (MTKLGRRNDGGG) show a composition bias toward basic and acidic residues. Residues 1–58 (MTKLGRRNDGGGKSHRSSTKRQRRTSVSVDDPSPGEEEEKTLVVLTDDSDSEEDDKPL) form a disordered region. The segment covering 13–24 (KSHRSSTKRQRR) has biased composition (basic residues). Residues 86 to 122 (CPNCFDPLKKPIFQCNNGHLACFLCCIKLKKRCSFCK) form an RING-type; degenerate zinc finger. The SBD stretch occupies residues 136–325 (VIKAGLVSCS…MEISIGDKND (190 aa)). The segment at 139-198 (AGLVSCSNAIYGCKQSTTYGNQLQSHEKVCVFAPCSCPIKDCNYIGFYKDLINHFRATHK) adopts an SIAH-type zinc-finger fold. Cysteine 144, cysteine 151, histidine 164, cysteine 168, cysteine 175, cysteine 180, histidine 192, and histidine 197 together coordinate Zn(2+).

Belongs to the SINA (Seven in absentia) family.

The catalysed reaction is S-ubiquitinyl-[E2 ubiquitin-conjugating enzyme]-L-cysteine + [acceptor protein]-L-lysine = [E2 ubiquitin-conjugating enzyme]-L-cysteine + N(6)-ubiquitinyl-[acceptor protein]-L-lysine.. The protein operates within protein modification; protein ubiquitination. Its function is as follows. E3 ubiquitin-protein ligase that mediates ubiquitination and subsequent proteasomal degradation of target proteins. E3 ubiquitin ligases accept ubiquitin from an E2 ubiquitin-conjugating enzyme in the form of a thioester and then directly transfers the ubiquitin to targeted substrates. It probably triggers the ubiquitin-mediated degradation of different substrates. This Arabidopsis thaliana (Mouse-ear cress) protein is E3 ubiquitin-protein ligase SINA-like 4.